Consider the following 456-residue polypeptide: Dual-specificity RNA methyltransferase RlmN (456 aa).

Residues 1-21 (MIQRHLGQPRLIQNGGDAGGV) form a disordered region. Glu175 (proton acceptor) is an active-site residue. One can recognise a Radical SAM core domain in the interval 183-416 (DEERGAVCIS…QDAGYSAPIR (234 aa)). Cys190 and Cys427 are oxidised to a cystine. Residues Cys197, Cys201, and Cys204 each contribute to the [4Fe-4S] cluster site. Residues 253 to 254 (GE), Ser285, 307 to 309 (SLH), and Asn384 contribute to the S-adenosyl-L-methionine site. Residue Cys427 is the S-methylcysteine intermediate of the active site.

Belongs to the radical SAM superfamily. RlmN family. [4Fe-4S] cluster is required as a cofactor.

The protein resides in the cytoplasm. The enzyme catalyses adenosine(2503) in 23S rRNA + 2 reduced [2Fe-2S]-[ferredoxin] + 2 S-adenosyl-L-methionine = 2-methyladenosine(2503) in 23S rRNA + 5'-deoxyadenosine + L-methionine + 2 oxidized [2Fe-2S]-[ferredoxin] + S-adenosyl-L-homocysteine. It catalyses the reaction adenosine(37) in tRNA + 2 reduced [2Fe-2S]-[ferredoxin] + 2 S-adenosyl-L-methionine = 2-methyladenosine(37) in tRNA + 5'-deoxyadenosine + L-methionine + 2 oxidized [2Fe-2S]-[ferredoxin] + S-adenosyl-L-homocysteine. In terms of biological role, specifically methylates position 2 of adenine 2503 in 23S rRNA and position 2 of adenine 37 in tRNAs. m2A2503 modification seems to play a crucial role in the proofreading step occurring at the peptidyl transferase center and thus would serve to optimize ribosomal fidelity. The protein is Dual-specificity RNA methyltransferase RlmN of Paramagnetospirillum magneticum (strain ATCC 700264 / AMB-1) (Magnetospirillum magneticum).